The chain runs to 213 residues: Large ribosomal subunit protein uL1 (213 aa).

Belongs to the universal ribosomal protein uL1 family. As to quaternary structure, part of the 50S ribosomal subunit.

Its function is as follows. Binds directly to 23S rRNA. Probably involved in E site tRNA release. Protein L1 is also a translational repressor protein, it controls the translation of its operon by binding to its mRNA. The polypeptide is Large ribosomal subunit protein uL1 (Methanoculleus marisnigri (strain ATCC 35101 / DSM 1498 / JR1)).